Reading from the N-terminus, the 553-residue chain is Serine protease 53 (553 aa).

Positions 1 to 23 (MKWCWGPVLLIAGATVLMEGLQA) are cleaved as a signal peptide. Peptidase S1 domains follow at residues 24–273 (AQRA…ARVQ) and 294–526 (VACG…SLDW). The segment at 27–46 (ACGQRGPGPPKPQEGNTVPG) is disordered. A disulfide bridge connects residues C62 and C78. Active-site charge relay system residues include H77 and D128. 4 disulfides stabilise this stretch: C158-C230, C187-C209, C220-C249, and C326-C342. Active-site charge relay system residues include S224, H341, and D382. Intrachain disulfides connect C444/C464 and C474/C502. Residue S478 is the Charge relay system of the active site.

The protein belongs to the peptidase S1 family. As to expression, predominantly detected in testis, liver, heart and ovary, as well as in several tumor cell lines.

The protein resides in the secreted. Its function is as follows. In vitro can degrade the fibrinogen alpha chain of as well as pro-urokinase-type plasminogen activator. The protein is Serine protease 53 (PRSS53) of Homo sapiens (Human).